The primary structure comprises 363 residues: Holliday junction branch migration complex subunit RuvB (363 aa).

Positions 1 to 44 (MAIKRNQGHGLPPKRDPALGRDALTTSQALPEDQEQSANEDRIR) are disordered. A large ATPase domain (RuvB-L) region spans residues 13–204 (PKRDPALGRD…FGLIQRLRFY (192 aa)). ATP contacts are provided by Ile43, Arg44, Gly85, Lys88, Thr89, Thr90, Arg194, Tyr204, and Arg241. Residue Thr89 coordinates Mg(2+). The segment at 205–275 (EVDELIAIVH…VAATALDLYN (71 aa)) is small ATPAse domain (RuvB-S). A head domain (RuvB-H) region spans residues 278-363 (ALGLDWTDRL…EQSTQLDFLP (86 aa)). 2 residues coordinate DNA: Arg333 and Arg338.

It belongs to the RuvB family. In terms of assembly, homohexamer. Forms an RuvA(8)-RuvB(12)-Holliday junction (HJ) complex. HJ DNA is sandwiched between 2 RuvA tetramers; dsDNA enters through RuvA and exits via RuvB. An RuvB hexamer assembles on each DNA strand where it exits the tetramer. Each RuvB hexamer is contacted by two RuvA subunits (via domain III) on 2 adjacent RuvB subunits; this complex drives branch migration. In the full resolvosome a probable DNA-RuvA(4)-RuvB(12)-RuvC(2) complex forms which resolves the HJ.

It is found in the cytoplasm. The catalysed reaction is ATP + H2O = ADP + phosphate + H(+). Functionally, the RuvA-RuvB-RuvC complex processes Holliday junction (HJ) DNA during genetic recombination and DNA repair, while the RuvA-RuvB complex plays an important role in the rescue of blocked DNA replication forks via replication fork reversal (RFR). RuvA specifically binds to HJ cruciform DNA, conferring on it an open structure. The RuvB hexamer acts as an ATP-dependent pump, pulling dsDNA into and through the RuvAB complex. RuvB forms 2 homohexamers on either side of HJ DNA bound by 1 or 2 RuvA tetramers; 4 subunits per hexamer contact DNA at a time. Coordinated motions by a converter formed by DNA-disengaged RuvB subunits stimulates ATP hydrolysis and nucleotide exchange. Immobilization of the converter enables RuvB to convert the ATP-contained energy into a lever motion, pulling 2 nucleotides of DNA out of the RuvA tetramer per ATP hydrolyzed, thus driving DNA branch migration. The RuvB motors rotate together with the DNA substrate, which together with the progressing nucleotide cycle form the mechanistic basis for DNA recombination by continuous HJ branch migration. Branch migration allows RuvC to scan DNA until it finds its consensus sequence, where it cleaves and resolves cruciform DNA. This is Holliday junction branch migration complex subunit RuvB from Picosynechococcus sp. (strain ATCC 27264 / PCC 7002 / PR-6) (Agmenellum quadruplicatum).